A 514-amino-acid polypeptide reads, in one-letter code: Na(+)/H(+) antiporter NhaB (514 aa).

11 consecutive transmembrane segments (helical) span residues 21 to 41 (LAIVVFLIINPIVFFFISPFI), 43 to 63 (GWLLVAEFIFTLAMALKCYPL), 88 to 108 (IMANFEVILLLIFMVAGIFFM), 143 to 163 (FLDALTVVAVIISVAMGFYGV), 203 to 223 (LMMHAGVGTALGGVMTVVGEP), 239 to 259 (FFLRMAPVTIPVFICGLLTCF), 304 to 324 (ALIAIWLILGLAFHLAAVGLI), 349 to 369 (QESLPFTALLVVFFSVVAVII), 390 to 410 (LALFYLFNGLLSSISDNVFVA), 448 to 468 (ATPNGQAAFLFLLTSSISPLI), and 484 to 504 (IVLSIIGLLAIEFILPAATIW).

It belongs to the NhaB Na(+)/H(+) (TC 2.A.34) antiporter family.

Its subcellular location is the cell inner membrane. The catalysed reaction is 2 Na(+)(in) + 3 H(+)(out) = 2 Na(+)(out) + 3 H(+)(in). In terms of biological role, na(+)/H(+) antiporter that extrudes sodium in exchange for external protons. The chain is Na(+)/H(+) antiporter NhaB from Haemophilus influenzae (strain 86-028NP).